The following is a 1234-amino-acid chain: Transcription-repair-coupling factor (1234 aa).

In terms of domain architecture, Helicase ATP-binding spans 663-824 (DMEKPIPMDR…LAGIREMSTI (162 aa)). 676-683 (GDVGYGKT) lines the ATP pocket. Positions 777–780 (DEEQ) match the DEEQ box motif. The 158-residue stretch at 842 to 999 (DDKQIAAALR…GMAVALKDLE (158 aa)) folds into the Helicase C-terminal domain. The tract at residues 1207-1234 (RQHIGITNPSPPGEDGRGRNTTIKERQP) is disordered. Basic and acidic residues predominate over residues 1220–1234 (EDGRGRNTTIKERQP).

This sequence in the N-terminal section; belongs to the UvrB family. In the C-terminal section; belongs to the helicase family. RecG subfamily.

Its subcellular location is the cytoplasm. Its function is as follows. Couples transcription and DNA repair by recognizing RNA polymerase (RNAP) stalled at DNA lesions. Mediates ATP-dependent release of RNAP and its truncated transcript from the DNA, and recruitment of nucleotide excision repair machinery to the damaged site. This is Transcription-repair-coupling factor from Mycobacterium bovis (strain ATCC BAA-935 / AF2122/97).